The primary structure comprises 724 residues: Pre-mRNA-splicing factor CLF1 (724 aa).

16 HAT repeats span residues 55–87 (EFQARKRTEFESRIRYSRDSILAWTKYAQWEAS), 89–121 (NEYERSRSVFERALDVDPRSVDLWIKYTDMELK), 123–155 (RNINHARNLFDRAITLLPRVDALWYKYVYLEEL), 157–188 (LNVSGARQIFERWMQWEPNDKAWQSYIKLEER), 190–221 (NELDRASAIYERWIACRPIPKNWVAWAKFEED), 223–262 (GQPDKAREVFQTALEFFGDEEEQVEKAQSVFAAFARMETR), 264–298 (KEFERARVIYKFALARLPRSKSASLYAQYTKFEKQ), 308–340 (TVLGKRRIQYEEELAYDPTNYDAWFSLARLEED), 352–386 (VEPMRVREVYERAVANVPPALEKRYWRRYIYLWLQ), 396–432 (KDYDRARDVYKAAVKLVPHKTFTFAKLWLAYAYFEIR), 434–465 (LDVSAARKVLGAGIGMCPKPKLFTGYIELEMR), 467–499 (REFDRVRTLYEKFLTYDPSLSSAWIQWTQVESA), 501–534 (EDFERVRAIFELAVQQSLDMPEIVWKAYIDFEAG), 536–567 (GERERARNLYERLLERTSHVKVWISYALMEIA), 585–626 (GDAD…EHGD), and 635–667 (DMLPTTRKRWRKAEDGSGELEEYWDLVFPDDEK). A disordered region spans residues 681–724 (QAWAQQRAGQGEEGGLSYDLPSDSESENEDEDGDNREEEGMDQD). Residues 702 to 724 (SDSESENEDEDGDNREEEGMDQD) show a composition bias toward acidic residues.

The protein belongs to the crooked-neck family. As to quaternary structure, associated with the spliceosome.

It is found in the nucleus. In terms of biological role, involved in pre-mRNA splicing and cell cycle progression. Required for the spliceosome assembly and initiation of the DNA replication. This is Pre-mRNA-splicing factor CLF1 (CLF1) from Cryptococcus neoformans var. grubii serotype A (strain H99 / ATCC 208821 / CBS 10515 / FGSC 9487) (Filobasidiella neoformans var. grubii).